The following is a 667-amino-acid chain: Soluble guanylate cyclase 89Da (667 aa).

Histidine 104 lines the heme pocket. The interval 337–364 (AQEFSESHPVDDDESAREDEIDPATGER) is disordered. Residues 347–358 (DDDESAREDEID) show a composition bias toward acidic residues. Residues 427 to 455 (QHCSKLEIMFEKEEQRSDELEKSLELADS) are a coiled coil. A Guanylate cyclase domain is found at 491–617 (SVIFLEVMNV…DTVNTASRME (127 aa)).

The protein belongs to the adenylyl cyclase class-4/guanylyl cyclase family. Heterodimer; with Gyc88E, in the presence of magnesium or manganese. It depends on heme as a cofactor.

It localises to the cytoplasm. The catalysed reaction is GTP = 3',5'-cyclic GMP + diphosphate. With respect to regulation, probably not activated by nitric oxide (NO). Heterodimer also exhibits some stimulation, some compounds (SIN-1 and two of the NONOates) that were ineffective at stimulating Gyc-88E alone did stimulate the heterodimer. Functionally, heterodimers with Gyc-89Da and Gyc-89Db are activated in response to changing oxygen concentrations, alerting flies to hypoxic environments. Under normal oxygen concentrations, oxygen binds to the heme group and results in low levels of guanylyl cyclase activity. When exposed to reduced oxygen concentrations, the oxygen dissociates from the heme group resulting in activation of the enzyme. This Drosophila melanogaster (Fruit fly) protein is Soluble guanylate cyclase 89Da.